A 417-amino-acid chain; its full sequence is Dibenzothiophene monooxygenase (417 aa).

Residues 18–124 (NDPVAVARGL…HLYTQIAQNN (107 aa)) form a helical N-terminus region. FMN-binding positions include Y96, 129 to 134 (NASSEN), 159 to 163 (KHFCS), R282, 369 to 370 (AR), and H391. The interval 125 to 233 (WWTGNASSEN…KVEPDEVLGA (109 aa)) is central beta-barrel N-terminus. Positions 131–142 (SSENNSHVLDWK) are lid loop. Positions 234 to 417 (PNAFVLAFIQ…GQYPIPGFTS (184 aa)) are helical C-terminus.

This sequence belongs to the DszC flavin monooxygenase family. In terms of assembly, homotetramer formed by a dimer of dimers; FMN binds between monomers of the homodimer.

Its subcellular location is the cytoplasm. It catalyses the reaction dibenzothiophene + 2 FMNH2 + 2 O2 = dibenzothiophene 5,5-dioxide + 2 FMN + 2 H2O + 2 H(+). It carries out the reaction dibenzothiophene + FMNH2 + O2 = dibenzothiophene 5-oxide + FMN + H2O + H(+). The catalysed reaction is dibenzothiophene 5-oxide + FMNH2 + O2 = dibenzothiophene 5,5-dioxide + FMN + H2O + H(+). The protein operates within sulfur metabolism; dibenzothiophene degradation. With respect to regulation, DBT degradation completely inhibited by Cu(2+), Mn(2+), p-chloromercuribenzoic acid, 2,2-bipyridyl, 1,10-phenanthroline, and strongly inhibited by Zn(2+), 5,5'- Dithiobis(2-nitrobenzoic acid) and 8-quinolinol. In terms of biological role, catalyzes the first step of the '4S' desulfurization pathway that removes covalently bound sulfur from dibenzothiophene (DBT) without breaking carbon-carbon bonds. Sulfur dioxygenase which converts DBT to DBT-sulfone (DBTO2 or DBT 5,5-dioxide) in a stepwise manner. Also acts on thioxanthen-9-one and 4,6-dimethyl DBT and 2,8-dimethyl DBT. This is Dibenzothiophene monooxygenase from Rhodococcus erythropolis (Arthrobacter picolinophilus).